A 483-amino-acid chain; its full sequence is Betaine aldehyde dehydrogenase (483 aa).

Residues I27 and D93 each contribute to the K(+) site. 149–151 provides a ligand contact to NAD(+); the sequence is GAW. The Charge relay system role is filled by K161. 175 to 178 is an NAD(+) binding site; that stretch reads KPSE. V179 is a binding site for K(+). Residue 228–231 coordinates NAD(+); that stretch reads SVPT. V243 is a binding site for K(+). E249 functions as the Proton acceptor in the catalytic mechanism. Positions 251, 283, and 380 each coordinate NAD(+). Residue C283 is the Nucleophile of the active site. Residue C283 is modified to Cysteine sulfenic acid (-SOH). Residues K450 and G453 each coordinate K(+). E457 acts as the Charge relay system in catalysis.

The protein belongs to the aldehyde dehydrogenase family. Dimer of dimers. It depends on K(+) as a cofactor.

It carries out the reaction betaine aldehyde + NAD(+) + H2O = glycine betaine + NADH + 2 H(+). It functions in the pathway amine and polyamine biosynthesis; betaine biosynthesis via choline pathway; betaine from betaine aldehyde: step 1/1. Involved in the biosynthesis of the osmoprotectant glycine betaine. Catalyzes the irreversible oxidation of betaine aldehyde to the corresponding acid. The polypeptide is Betaine aldehyde dehydrogenase (Cereibacter sphaeroides (strain ATCC 17023 / DSM 158 / JCM 6121 / CCUG 31486 / LMG 2827 / NBRC 12203 / NCIMB 8253 / ATH 2.4.1.) (Rhodobacter sphaeroides)).